A 526-amino-acid chain; its full sequence is Light-independent protochlorophyllide reductase subunit B (526 aa).

A [4Fe-4S] cluster-binding site is contributed by aspartate 36. Aspartate 284 serves as the catalytic Proton donor. 419-420 contributes to the substrate binding site; it reads GL.

It belongs to the ChlB/BchB/BchZ family. Protochlorophyllide reductase is composed of three subunits; BchL, BchN and BchB. Forms a heterotetramer of two BchB and two BchN subunits. It depends on [4Fe-4S] cluster as a cofactor.

The enzyme catalyses chlorophyllide a + oxidized 2[4Fe-4S]-[ferredoxin] + 2 ADP + 2 phosphate = protochlorophyllide a + reduced 2[4Fe-4S]-[ferredoxin] + 2 ATP + 2 H2O. It functions in the pathway porphyrin-containing compound metabolism; bacteriochlorophyll biosynthesis (light-independent). In terms of biological role, component of the dark-operative protochlorophyllide reductase (DPOR) that uses Mg-ATP and reduced ferredoxin to reduce ring D of protochlorophyllide (Pchlide) to form chlorophyllide a (Chlide). This reaction is light-independent. The NB-protein (BchN-BchB) is the catalytic component of the complex. This Halorhodospira halophila (strain DSM 244 / SL1) (Ectothiorhodospira halophila (strain DSM 244 / SL1)) protein is Light-independent protochlorophyllide reductase subunit B.